We begin with the raw amino-acid sequence, 130 residues long: Small ribosomal subunit protein uS13 (130 aa).

Basic residues predominate over residues 97–116 (PVRGQRTKTNARTRRGKRKT). Residues 97 to 130 (PVRGQRTKTNARTRRGKRKTVGAGKSTSSIKRVK) form a disordered region. The segment covering 121–130 (KSTSSIKRVK) has biased composition (polar residues).

Belongs to the universal ribosomal protein uS13 family. As to quaternary structure, part of the 30S ribosomal subunit. Forms a loose heterodimer with protein S19. Forms two bridges to the 50S subunit in the 70S ribosome.

Its function is as follows. Located at the top of the head of the 30S subunit, it contacts several helices of the 16S rRNA. In the 70S ribosome it contacts the 23S rRNA (bridge B1a) and protein L5 of the 50S subunit (bridge B1b), connecting the 2 subunits; these bridges are implicated in subunit movement. Contacts the tRNAs in the A and P-sites. The polypeptide is Small ribosomal subunit protein uS13 (Endomicrobium trichonymphae).